Consider the following 209-residue polypeptide: Outer-membrane lipoprotein carrier protein (209 aa).

A signal peptide spans 1–21 (MHRQLRYAVLATALFASTAFA).

This sequence belongs to the LolA family. In terms of assembly, monomer.

The protein resides in the periplasm. Its function is as follows. Participates in the translocation of lipoproteins from the inner membrane to the outer membrane. Only forms a complex with a lipoprotein if the residue after the N-terminal Cys is not an aspartate (The Asp acts as a targeting signal to indicate that the lipoprotein should stay in the inner membrane). The protein is Outer-membrane lipoprotein carrier protein of Xanthomonas oryzae pv. oryzae (strain MAFF 311018).